A 400-amino-acid polypeptide reads, in one-letter code: Signal recognition particle receptor FtsY (400 aa).

Disordered stretches follow at residues 12–37 (TKKT…QEEQ) and 51–86 (NKIK…KDKK). The segment covering 51-72 (NKIKKTKTSETKKQEKPIETLK) has biased composition (basic and acidic residues). Residues 192 to 199 (GVNGTGKT), 278 to 282 (DTAGR), and 342 to 345 (TKMD) contribute to the GTP site.

It belongs to the GTP-binding SRP family. FtsY subfamily. Part of the signal recognition particle protein translocation system, which is composed of SRP and FtsY.

It is found in the cell membrane. The protein localises to the cytoplasm. The enzyme catalyses GTP + H2O = GDP + phosphate + H(+). Functionally, involved in targeting and insertion of nascent membrane proteins into the cytoplasmic membrane. Acts as a receptor for the complex formed by the signal recognition particle (SRP) and the ribosome-nascent chain (RNC). This Mycoplasma mycoides subsp. mycoides SC (strain CCUG 32753 / NCTC 10114 / PG1) protein is Signal recognition particle receptor FtsY.